The primary structure comprises 476 residues: Bifunctional protein HldE (476 aa).

A ribokinase region spans residues 1-319; that stretch reads MAQYSAQFPH…NAIHGRTVSG (319 aa). 195–198 is an ATP binding site; that stretch reads NMSE. Asp-264 is an active-site residue. Residues 344–476 form a cytidylyltransferase region; that stretch reads MTNGCFDILH…VIKKIRDLKD (133 aa).

This sequence in the N-terminal section; belongs to the carbohydrate kinase PfkB family. It in the C-terminal section; belongs to the cytidylyltransferase family. In terms of assembly, homodimer.

It catalyses the reaction D-glycero-beta-D-manno-heptose 7-phosphate + ATP = D-glycero-beta-D-manno-heptose 1,7-bisphosphate + ADP + H(+). The enzyme catalyses D-glycero-beta-D-manno-heptose 1-phosphate + ATP + H(+) = ADP-D-glycero-beta-D-manno-heptose + diphosphate. The protein operates within nucleotide-sugar biosynthesis; ADP-L-glycero-beta-D-manno-heptose biosynthesis; ADP-L-glycero-beta-D-manno-heptose from D-glycero-beta-D-manno-heptose 7-phosphate: step 1/4. It participates in nucleotide-sugar biosynthesis; ADP-L-glycero-beta-D-manno-heptose biosynthesis; ADP-L-glycero-beta-D-manno-heptose from D-glycero-beta-D-manno-heptose 7-phosphate: step 3/4. Functionally, catalyzes the phosphorylation of D-glycero-D-manno-heptose 7-phosphate at the C-1 position to selectively form D-glycero-beta-D-manno-heptose-1,7-bisphosphate. Catalyzes the ADP transfer from ATP to D-glycero-beta-D-manno-heptose 1-phosphate, yielding ADP-D-glycero-beta-D-manno-heptose. This chain is Bifunctional protein HldE, found in Actinobacillus succinogenes (strain ATCC 55618 / DSM 22257 / CCUG 43843 / 130Z).